The chain runs to 146 residues: Large ribosomal subunit protein bL9 (146 aa).

The protein belongs to the bacterial ribosomal protein bL9 family.

Binds to the 23S rRNA. This Deinococcus geothermalis (strain DSM 11300 / CIP 105573 / AG-3a) protein is Large ribosomal subunit protein bL9.